The chain runs to 642 residues: tRNA uridine 5-carboxymethylaminomethyl modification enzyme MnmG (642 aa).

Residues 12–17 (GAGHAG), valine 124, and serine 179 contribute to the FAD site. 272 to 286 (GPRYCPSIEDKITRF) contributes to the NAD(+) binding site. Glutamine 369 serves as a coordination point for FAD.

Belongs to the MnmG family. As to quaternary structure, homodimer. Heterotetramer of two MnmE and two MnmG subunits. FAD is required as a cofactor.

It is found in the cytoplasm. Its function is as follows. NAD-binding protein involved in the addition of a carboxymethylaminomethyl (cmnm) group at the wobble position (U34) of certain tRNAs, forming tRNA-cmnm(5)s(2)U34. The protein is tRNA uridine 5-carboxymethylaminomethyl modification enzyme MnmG of Bdellovibrio bacteriovorus (strain ATCC 15356 / DSM 50701 / NCIMB 9529 / HD100).